Reading from the N-terminus, the 191-residue chain is 3-isopropylmalate dehydratase small subunit (191 aa).

The protein belongs to the LeuD family. LeuD type 1 subfamily. Heterodimer of LeuC and LeuD.

It carries out the reaction (2R,3S)-3-isopropylmalate = (2S)-2-isopropylmalate. It participates in amino-acid biosynthesis; L-leucine biosynthesis; L-leucine from 3-methyl-2-oxobutanoate: step 2/4. In terms of biological role, catalyzes the isomerization between 2-isopropylmalate and 3-isopropylmalate, via the formation of 2-isopropylmaleate. In Anaeromyxobacter dehalogenans (strain 2CP-1 / ATCC BAA-258), this protein is 3-isopropylmalate dehydratase small subunit.